A 118-amino-acid polypeptide reads, in one-letter code: Ribonuclease P protein component (118 aa).

This sequence belongs to the RnpA family. Consists of a catalytic RNA component (M1 or rnpB) and a protein subunit.

The catalysed reaction is Endonucleolytic cleavage of RNA, removing 5'-extranucleotides from tRNA precursor.. RNaseP catalyzes the removal of the 5'-leader sequence from pre-tRNA to produce the mature 5'-terminus. It can also cleave other RNA substrates such as 4.5S RNA. The protein component plays an auxiliary but essential role in vivo by binding to the 5'-leader sequence and broadening the substrate specificity of the ribozyme. This is Ribonuclease P protein component from Ureaplasma urealyticum serovar 10 (strain ATCC 33699 / Western).